The sequence spans 373 residues: Diels-Alderase (373 aa).

It belongs to the Diels-Alderase family.

The enzyme catalyses (5S)-3-[(2E,6R,8E,10E,12E)-2,6-dimethyltetradeca-2,8,10,12-tetraenoyl]-5-(hydroxymethyl)pyrrolidine-2,4-dione = trichosetin. Its pathway is mycotoxin biosynthesis. Hybrid PKS-NRPS synthetase; part of the gene cluster that mediates the biosynthesis of trichosetin, a trans-fused decalin-containing tetramic acid with antimicrobial activity. The PKS module of PKS-NRPS1 together with the enoylreductase (ER) catalyze the formation of the polyketide unit which is then conjugated to L-serine by the condensation domain of the PKS-NRPS1 NRPS module. Activity of the Dieckmann cyclase domain (RED) results in release of the Dieckmann product intermediate. Diels-Alderase (DA) is involved in endo-selective Diels-Alder cycloaddition to form the decalin ring, leading to the production of N-desmethylequisetin also called trichosetin. The cluster does not contain the equisetin N-methyltransferase and consequently, trichosetin is isolated as final product. This Gibberella fujikuroi (strain CBS 195.34 / IMI 58289 / NRRL A-6831) (Bakanae and foot rot disease fungus) protein is Diels-Alderase.